A 309-amino-acid polypeptide reads, in one-letter code: Manganese-dependent inorganic pyrophosphatase (309 aa).

Mn(2+) is bound by residues H9, D13, D15, D75, H97, and D149.

As to quaternary structure, homodimer. Requires Mn(2+) as cofactor.

It is found in the cytoplasm. The enzyme catalyses diphosphate + H2O = 2 phosphate + H(+). The protein is Manganese-dependent inorganic pyrophosphatase (ppaC) of Bacillus subtilis (strain 168).